Here is a 351-residue protein sequence, read N- to C-terminus: Probable V-type proton ATPase subunit d (351 aa).

It belongs to the V-ATPase V0D/AC39 subunit family. As to quaternary structure, V-ATPase is a heteromultimeric enzyme composed of a peripheral catalytic V1 complex (components A to H) attached to an integral membrane V0 proton pore complex (components: a, c, c', c'' and d).

In terms of biological role, subunit of the integral membrane V0 complex of vacuolar ATPase. Vacuolar ATPase is responsible for acidifying a variety of intracellular compartments in eukaryotic cells, thus providing most of the energy required for transport processes in the vacuolar system. In Oryza sativa subsp. japonica (Rice), this protein is Probable V-type proton ATPase subunit d.